Reading from the N-terminus, the 94-residue chain is Co-chaperonin GroES (94 aa).

The protein belongs to the GroES chaperonin family. As to quaternary structure, heptamer of 7 subunits arranged in a ring. Interacts with the chaperonin GroEL.

The protein localises to the cytoplasm. Functionally, together with the chaperonin GroEL, plays an essential role in assisting protein folding. The GroEL-GroES system forms a nano-cage that allows encapsulation of the non-native substrate proteins and provides a physical environment optimized to promote and accelerate protein folding. GroES binds to the apical surface of the GroEL ring, thereby capping the opening of the GroEL channel. In Streptococcus agalactiae, this protein is Co-chaperonin GroES.